The primary structure comprises 428 residues: Histidine--tRNA ligase (428 aa).

It belongs to the class-II aminoacyl-tRNA synthetase family.

Its subcellular location is the cytoplasm. The catalysed reaction is tRNA(His) + L-histidine + ATP = L-histidyl-tRNA(His) + AMP + diphosphate + H(+). This Sulfolobus acidocaldarius (strain ATCC 33909 / DSM 639 / JCM 8929 / NBRC 15157 / NCIMB 11770) protein is Histidine--tRNA ligase.